A 405-amino-acid polypeptide reads, in one-letter code: Argininosuccinate synthase (405 aa).

Residues 11–19 (AYSGGLDTS) and alanine 38 each bind ATP. Positions 91 and 96 each coordinate L-citrulline. Residue glycine 121 coordinates ATP. Positions 123, 127, and 128 each coordinate L-aspartate. Asparagine 127 contributes to the L-citrulline binding site. Residues arginine 131, serine 181, serine 190, glutamate 266, and tyrosine 278 each coordinate L-citrulline.

It belongs to the argininosuccinate synthase family. Type 1 subfamily. Homotetramer.

It localises to the cytoplasm. The enzyme catalyses L-citrulline + L-aspartate + ATP = 2-(N(omega)-L-arginino)succinate + AMP + diphosphate + H(+). It participates in amino-acid biosynthesis; L-arginine biosynthesis; L-arginine from L-ornithine and carbamoyl phosphate: step 2/3. The polypeptide is Argininosuccinate synthase (Nitratiruptor sp. (strain SB155-2)).